The following is a 226-amino-acid chain: MGLWLSLCGAVVVVAYLLGSFPTGYIAVKQLKGIDIREVGSGSTGATNVLRTLGKGPGAFVLGLDCLKGVLAIALVDYLFNFATSQNLIPTTVNVQLWQPWLVTLAGIAAILGHSKSIFLGFTGGKSVATSLGILLAMNWQVGLATFGVFAVVVAISRIVSLSSIMGAIAVSIVMVVLQQPLPYILFGIAGGLYVILRHRSNIERLLAGTEPKIGQKLTTETEQSA.

The next 6 membrane-spanning stretches (helical) occupy residues 1 to 21 (MGLWLSLCGAVVVVAYLLGSF), 56 to 76 (GPGAFVLGLDCLKGVLAIALV), 102 to 122 (LVTLAGIAAILGHSKSIFLGF), 134 to 154 (ILLAMNWQVGLATFGVFAVVV), 159 to 178 (IVSLSSIMGAIAVSIVMVVL), and 182 to 197 (LPYILFGIAGGLYVIL).

Belongs to the PlsY family. In terms of assembly, probably interacts with PlsX.

Its subcellular location is the cell inner membrane. It carries out the reaction an acyl phosphate + sn-glycerol 3-phosphate = a 1-acyl-sn-glycero-3-phosphate + phosphate. It participates in lipid metabolism; phospholipid metabolism. Functionally, catalyzes the transfer of an acyl group from acyl-phosphate (acyl-PO(4)) to glycerol-3-phosphate (G3P) to form lysophosphatidic acid (LPA). This enzyme utilizes acyl-phosphate as fatty acyl donor, but not acyl-CoA or acyl-ACP. The protein is Glycerol-3-phosphate acyltransferase of Trichormus variabilis (strain ATCC 29413 / PCC 7937) (Anabaena variabilis).